A 108-amino-acid polypeptide reads, in one-letter code: Replication restart protein PriB (108 aa).

Residues 8 to 108 (VDNRFSLIGK…LHAEQIEFIE (101 aa)) enclose the SSB domain.

Belongs to the PriB family. As to quaternary structure, homodimer. Interacts with PriA and DnaT. Component of the replication restart primosome. Primosome assembly occurs via a 'hand-off' mechanism. PriA binds to replication forks, subsequently PriB then DnaT bind; DnaT then displaces ssDNA to generate the helicase loading substrate.

Its function is as follows. Involved in the restart of stalled replication forks, which reloads the replicative helicase on sites other than the origin of replication; the PriA-PriB pathway is the major replication restart pathway. During primosome assembly it facilitates complex formation between PriA and DnaT on DNA; stabilizes PriA on DNA. Stimulates the DNA unwinding activity of PriA helicase. This Histophilus somni (strain 2336) (Haemophilus somnus) protein is Replication restart protein PriB.